A 133-amino-acid polypeptide reads, in one-letter code: Large ribosomal subunit protein bL12 (133 aa).

This sequence belongs to the bacterial ribosomal protein bL12 family. As to quaternary structure, homodimer. Part of the ribosomal stalk of the 50S ribosomal subunit. Forms a multimeric L10(L12)X complex, where L10 forms an elongated spine to which 2 to 4 L12 dimers bind in a sequential fashion. Binds GTP-bound translation factors.

Its function is as follows. Forms part of the ribosomal stalk which helps the ribosome interact with GTP-bound translation factors. Is thus essential for accurate translation. The chain is Large ribosomal subunit protein bL12 from Trichodesmium erythraeum (strain IMS101).